Reading from the N-terminus, the 84-residue chain is Small ribosomal subunit protein bS20 (84 aa).

It belongs to the bacterial ribosomal protein bS20 family.

In terms of biological role, binds directly to 16S ribosomal RNA. The sequence is that of Small ribosomal subunit protein bS20 from Ligilactobacillus salivarius (strain UCC118) (Lactobacillus salivarius).